Consider the following 220-residue polypeptide: Nucleolar protein 3 (220 aa).

Gly2 is lipidated: N-myristoyl glycine. Residues 4-95 (VQERPSETID…MPDPAWDWQH (92 aa)) enclose the CARD domain. The tract at residues 20-70 (VETLQADSGLLLDALVARGVLTGPEYEALDALPDAERRVRRLLLLVQSKGE) is essential for interaction with BAX. The tract at residues 111–220 (GHWTPEAPSS…FQEEDESEDS (110 aa)) is disordered. Position 149 is a phosphothreonine; by CK2 (Thr149). A compositionally biased stretch (acidic residues) spans 152–220 (EPELEAEATE…FQEEDESEDS (69 aa)).

As to quaternary structure, oligomerizes (via CARD doamin). Interacts (via CARD domain) with CASP2; inhibits CASP2 activity in a phosphorylation-dependent manner. Interacts with CASP8; decreases CASP8 activity in a mitochondria localization- and phosphorylation-dependent manner and this interaction is dissociated by calcium. Interacts with TFPT; translocates NOL3 into the nucleus and negatively regulated TFPT-induced cell death. Interacts directly (via CARD domain) with FAS and FADD (via DED domain); inhibits death-inducing signaling complex (DISC) assembly by inhibiting the increase in FAS-FADD binding induced by FAS activation. Interacts (via CARD domain) with BAX (via a C-terminal 33 residues); inhibits BAX activation and translocation and consequently cytochrome c release from mitochondria. Interacts with PPM1G; may dephosphorylate NOL3. Interacts (via CARD domain) with BBC3 (via BH3 domain); preventing the association of BBC3 with BCL2 and resulting in activation of CASP8. Interacts (via CARD domain) with BAD(via BH3 domain); preventing the association of BAD with BCL2. Interacts directly (via CARD domain) with TNFRSF1A; inhibits TNF-signaling pathway. Post-translationally, phosphorylation at Thr-149 is required for its antiapoptotic effect by blocking death-inducing signaling complex death-inducing signaling complex (DISC) activity through the control of interaction with CASP8. Phosphorylation at Thr-149 results in translocation to mitochondria and this translocation enables the binding to CASP8. Dephosphorylated at Thr-149 by calcineurin; doesn't inhibit the association between FADD and CASP8 and the consequent apoptosis. In terms of processing, polyubiquitinated by MDM2; promoting proteasomal-dependent degradation in response to apoptotic stimuli.

Its subcellular location is the cytoplasm. The protein localises to the mitochondrion. It is found in the sarcoplasmic reticulum. The protein resides in the membrane. Apoptosis repressor that blocks multiple modes of cell death. Inhibits extrinsic apoptotic pathways through two different ways. Firstly by interacting with FAS and FADD upon FAS activation blocking death-inducing signaling complex (DISC) assembly. Secondly by interacting with CASP8 in a mitochondria localization- and phosphorylation-dependent manner, limiting the amount of soluble CASP8 available for DISC-mediated activation. Inhibits intrinsic apoptotic pathway in response to a wide range of stresses, through its interaction with BAX resulting in BAX inactivation, preventing mitochondrial dysfunction and release of pro-apoptotic factors. Inhibits calcium-mediated cell death by functioning as a cytosolic calcium buffer, dissociating its interaction with CASP8 and maintaining calcium homeostasis. Negatively regulates oxidative stress-induced apoptosis by phosphorylation-dependent suppression of the mitochondria-mediated intrinsic pathway, by blocking CASP2 activation and BAX translocation. Negatively regulates hypoxia-induced apoptosis in part by inhibiting the release of cytochrome c from mitochondria in a caspase-independent manner. Also inhibits TNF-induced necrosis by preventing TNF-signaling pathway through TNFRSF1A interaction abrogating the recruitment of RIPK1 to complex I. Finally through its role as apoptosis repressor, promotes vascular remodeling through inhibition of apoptosis and stimulation of proliferation, in response to hypoxia. Inhibits too myoblast differentiation through caspase inhibition. The protein is Nucleolar protein 3 (Nol3) of Mus musculus (Mouse).